Reading from the N-terminus, the 266-residue chain is Calpain small subunit 1 (266 aa).

Met1 bears the N-acetylmethionine mark. Residue Ser6 is modified to Phosphoserine. The region spanning 94 to 128 is the EF-hand 1; atypical domain; that stretch reads EEVRQFRRLFAQLAGDDMEVSATELMNILNKVVTR. Residues Ala107, Asp110, Glu112, Glu117, Asp135, Asp150, Asp152, Thr154, Lys156, and Glu161 each coordinate Ca(2+). 4 consecutive EF-hand domains span residues 137 to 170, 167 to 202, 203 to 231, and 232 to 266; these read FGLD…NNIK, NNIK…AGFH, LNEH…ISCL, and VRLD…TMYS. Position 177 is an N6-acetyllysine (Lys177). 6 residues coordinate Ca(2+): Asp180, Asp182, Ser184, Thr186, Glu191, and Asp223.

Homodimer or heterodimer of a large (catalytic) and a small (regulatory) subunit. In presence of calcium, the heterodimer dissociates. In terms of processing, the N-terminus is blocked.

The protein localises to the cytoplasm. Its subcellular location is the cell membrane. Regulatory subunit of the calcium-regulated non-lysosomal thiol-protease which catalyzes limited proteolysis of substrates involved in cytoskeletal remodeling and signal transduction. Essential for embryonic development. This chain is Calpain small subunit 1 (CAPNS1), found in Oryctolagus cuniculus (Rabbit).